The chain runs to 185 residues: VEVDCSRFPNTTNEEGKDVLVCTEDLRPICGTDGVTHSECLLCAYNIEYGTNISKEHDGECREAVPMDCSRYPNTTSEEGKVMILCNKALNPVCGTDGVTYDNECVLCAHNLEQGTSVGKKHDGECRKELAAVSVDCSEYPKPACTLEYRPLCGSDNKTYGNKCNFCNAVVESNGTLTLSHFGKC.

Kazal-like domains lie at 1–63 (VEVD…ECRE), 64–128 (AVPM…ECRK), and 131–185 (AAVS…FGKC). 9 disulfides stabilise this stretch: Cys-5/Cys-43, Cys-22/Cys-40, Cys-30/Cys-61, Cys-69/Cys-108, Cys-86/Cys-105, Cys-94/Cys-126, Cys-137/Cys-167, Cys-145/Cys-164, and Cys-153/Cys-185. Residue Asn-174 is glycosylated (N-linked (GlcNAc...) asparagine).

The protein localises to the secreted. This is Ovomucoid from Meleagris gallopavo (Wild turkey).